The sequence spans 145 residues: MLSIDTNILLYAQNRDCPEHDAAAAFLVECAGRADVAVCELVLMELYQLLRNPTVVTRPLEGPEAAEVCQTFRRNRRWALLENAPVMNEVWVLAATPRIARRRLFDARLALTLRHHGVDEFATRNINGFTDFGFSRVWDPITSDG.

Positions 4–123 (IDTNILLYAQ…RHHGVDEFAT (120 aa)) constitute a PINc domain. Residues D5 and D106 each contribute to the Mg(2+) site.

It belongs to the PINc/VapC protein family. Requires Mg(2+) as cofactor.

Toxic component of a type II toxin-antitoxin (TA) system. An RNase. Its cognate antitoxin is VapB24. The protein is Ribonuclease VapC24 of Mycobacterium tuberculosis (strain CDC 1551 / Oshkosh).